A 372-amino-acid chain; its full sequence is MRSKVTGAQRWVVKIGSALLTADGKGLDRGAMAVWVEQMVALREAGVELVLVSSGAVAAGMSQLGWTSRPSAMNELQAAASIGQMRLVQAWESSFGEHGKHTAQILLTHDDLSDRKRYLNARSTLRTLVDLGVVPVINENDTVVTDEIRFGDNDTLAALVANLVEADLLVILTDRDGMFDADPRNNPEAQLIYEARADDPALDAVAGGTGGALGRGGMQTKLRAARLAARSGAHTIIIGGRIERVLDRLKAGERLGTLLSPERGMLAARKQWLAGHLQTRGTLVLDDGAVKALRESNKSLLPVGVKTVQGSFRRGEMVVCVGQDGHEIARGLANYSALEAQKIIGQPSDAIESLLGYSAEPELVHRDNLVLV.

ATP is bound at residue Lys-14. 3 residues coordinate substrate: Ser-54, Asp-141, and Asn-153. 173 to 174 lines the ATP pocket; the sequence is TD. The PUA domain maps to 280–358; sequence RGTLVLDDGA…DAIESLLGYS (79 aa).

Belongs to the glutamate 5-kinase family.

The protein localises to the cytoplasm. It catalyses the reaction L-glutamate + ATP = L-glutamyl 5-phosphate + ADP. It functions in the pathway amino-acid biosynthesis; L-proline biosynthesis; L-glutamate 5-semialdehyde from L-glutamate: step 1/2. Catalyzes the transfer of a phosphate group to glutamate to form L-glutamate 5-phosphate. The polypeptide is Glutamate 5-kinase (Pseudomonas entomophila (strain L48)).